Reading from the N-terminus, the 271-residue chain is Extracellular metalloprotease ARB_05317 (271 aa).

An N-terminal signal peptide occupies residues 1-19 (MRFSVLLTGLAAAGSIATA). The N-linked (GlcNAc...) asparagine glycan is linked to asparagine 136. Zn(2+) is bound at residue histidine 185. The active site involves glutamate 186. Histidine 189 lines the Zn(2+) pocket. N-linked (GlcNAc...) asparagine glycosylation occurs at asparagine 200. The cysteines at positions 222 and 248 are disulfide-linked.

Belongs to the peptidase M43B family.

It is found in the secreted. Functionally, secreted metalloproteinase that allows assimilation of proteinaceous substrates. Plays a pivotal role as a pathogenicity determinant during infections and contributes to the ability of the pathogen to persist within the mammalian host. This is Extracellular metalloprotease ARB_05317 from Arthroderma benhamiae (strain ATCC MYA-4681 / CBS 112371) (Trichophyton mentagrophytes).